Here is a 358-residue protein sequence, read N- to C-terminus: UDP-N-acetylglucosamine--N-acetylmuramyl-(pentapeptide) pyrophosphoryl-undecaprenol N-acetylglucosamine transferase (358 aa).

Residues 13–15 (TAG), arginine 166, serine 196, and glutamine 291 each bind UDP-N-acetyl-alpha-D-glucosamine.

This sequence belongs to the glycosyltransferase 28 family. MurG subfamily.

The protein resides in the cell membrane. The enzyme catalyses di-trans,octa-cis-undecaprenyl diphospho-N-acetyl-alpha-D-muramoyl-L-alanyl-D-glutamyl-meso-2,6-diaminopimeloyl-D-alanyl-D-alanine + UDP-N-acetyl-alpha-D-glucosamine = di-trans,octa-cis-undecaprenyl diphospho-[N-acetyl-alpha-D-glucosaminyl-(1-&gt;4)]-N-acetyl-alpha-D-muramoyl-L-alanyl-D-glutamyl-meso-2,6-diaminopimeloyl-D-alanyl-D-alanine + UDP + H(+). The protein operates within cell wall biogenesis; peptidoglycan biosynthesis. Cell wall formation. Catalyzes the transfer of a GlcNAc subunit on undecaprenyl-pyrophosphoryl-MurNAc-pentapeptide (lipid intermediate I) to form undecaprenyl-pyrophosphoryl-MurNAc-(pentapeptide)GlcNAc (lipid intermediate II). This is UDP-N-acetylglucosamine--N-acetylmuramyl-(pentapeptide) pyrophosphoryl-undecaprenol N-acetylglucosamine transferase from Clostridium botulinum (strain Alaska E43 / Type E3).